A 312-amino-acid chain; its full sequence is Cytochrome f (312 aa).

A signal peptide spans 1 to 30; sequence MYLSKNFFLNLKTFIFSFFVLCFFSQSAQA. Residues Tyr-31, Cys-51, Cys-54, and His-55 each contribute to the heme site. A helical membrane pass occupies residues 278–298; it reads VQGLLLFSLFILLAQIFLVLK.

Belongs to the cytochrome f family. The 4 large subunits of the cytochrome b6-f complex are cytochrome b6, subunit IV (17 kDa polypeptide, petD), cytochrome f and the Rieske protein, while the 4 small subunits are PetG, PetL, PetM and PetN. The complex functions as a dimer. The cofactor is heme.

The protein localises to the plastid. The protein resides in the chloroplast thylakoid membrane. Its function is as follows. Component of the cytochrome b6-f complex, which mediates electron transfer between photosystem II (PSII) and photosystem I (PSI), cyclic electron flow around PSI, and state transitions. The protein is Cytochrome f (petA) of Bigelowiella natans (Pedinomonas minutissima).